We begin with the raw amino-acid sequence, 109 residues long: Protein NATD1 (109 aa).

Residues 18-108 form the N-acetyltransferase domain; that stretch reads EHDRKRRQFS…PLPQYLERLQ (91 aa).

Belongs to the NATD1 family.

This chain is Protein NATD1 (natd1), found in Xenopus tropicalis (Western clawed frog).